A 71-amino-acid chain; its full sequence is Serine palmitoyltransferase small subunit A (71 aa).

Residues 1 to 12 are Cytoplasmic-facing; the sequence is MAGMALARAWKQ. The helical transmembrane segment at 13-29 threads the bilayer; sequence MSWFYYQYLLVTALYML. At 30-34 the chain is on the lumenal side; the sequence is EPWER. The chain crosses the membrane as a helical span at residues 35–57; that stretch reads TVFNSMLVSVVGMALYTGYVFMP. Residues 58–71 lie on the Cytoplasmic side of the membrane; the sequence is QHIMAILHYFEIVQ.

The protein belongs to the SPTSS family. SPTSSA subfamily. As to quaternary structure, component of the serine palmitoyltransferase (SPT) complex, which is composed of SPTLC1, SPTLC2 or SPTLC3 and SPTSSA or SPTSSB. The heterodimer consisting of SPTLC1 and SPTLC2/SPTLC3 forms the catalytic core of the enzyme, while SPTSSA or SPTSSB subunits determine substrate specificity. SPT also interacts with ORMDL proteins, especially ORMDL3, which negatively regulate SPT activity in the presence of ceramides. Interacts with MBOAT7; the interaction plays a role in MBOAT7 localization to mitochondria-associated membranes.

The protein resides in the endoplasmic reticulum membrane. Its pathway is lipid metabolism; sphingolipid metabolism. Component of the serine palmitoyltransferase multisubunit enzyme (SPT) that catalyzes the initial and rate-limiting step in sphingolipid biosynthesis by condensing L-serine and activated acyl-CoA (most commonly palmitoyl-CoA) to form long-chain bases. The SPT complex is composed of SPTLC1, SPTLC2 or SPTLC3 and SPTSSA or SPTSSB. Within this complex, the heterodimer consisting of SPTLC1 and SPTLC2/SPTLC3 forms the catalytic core. Within the SPT complex, SPTSSA stimulates the catalytic activity and plays a role in substrate specificity, which depends upon the overall complex composition. The SPTLC1-SPTLC2-SPTSSA complex shows a strong preference for C16-CoA substrate, while the SPTLC1-SPTLC3-SPTSSA isozyme uses both C14-CoA and C16-CoA as substrates, with a slight preference for C14-CoA. Independently of its action as a SPT component, may be involved in MBOAT7 localization to mitochondria-associated membranes, a membrane bridge between the endoplasmic reticulum and mitochondria, may hence affect MBOAT7-catalyzed incorporation of arachidonic acid into phosphatidylinositol. This Mus musculus (Mouse) protein is Serine palmitoyltransferase small subunit A.